A 321-amino-acid chain; its full sequence is MEVKLDFSSEDFSNYSYNYSGDIYYGDVAPCVVNFLISESALAFIYVLMFLCNAIGNSLVLRTFLKYRAQAQSFDYLMMGFCLNSLFLAGYLLMRLLRMFEIFMNTELCKLEAFFLNLSIYWSPFILVFISVLRCLLIFCATRLWVKKTLIGQVFLCCSFVLACFGALPHVMVTSYYEPSSCIEEDGVLTEQLRTKLNTFHTWYSFAGPLFITVICYSMSCYKLFKTKLSKRAEVVTIITMTTLLFIVFCIPYYIMESIDTLLRVGVIEETCAKRSAIVYGIQCTYMLLVLYYCMLPLMFAMFGSLFRQRMAAWCKTICHC.

At 1-34 the chain is on the extracellular side; it reads MEVKLDFSSEDFSNYSYNYSGDIYYGDVAPCVVN. N-linked (GlcNAc...) asparagine; by host glycans are attached at residues N14 and N18. Residues 35–51 traverse the membrane as a helical segment; it reads FLISESALAFIYVLMFL. Over 52–76 the chain is Cytoplasmic; it reads CNAIGNSLVLRTFLKYRAQAQSFDY. Residues 77–93 form a helical membrane-spanning segment; that stretch reads LMMGFCLNSLFLAGYLL. The Extracellular segment spans residues 94 to 124; the sequence is MRLLRMFEIFMNTELCKLEAFFLNLSIYWSP. N117 carries N-linked (GlcNAc...) asparagine; by host glycosylation. A helical transmembrane segment spans residues 125–141; it reads FILVFISVLRCLLIFCA. Topologically, residues 142 to 149 are cytoplasmic; sequence TRLWVKKT. Residues 150–166 form a helical membrane-spanning segment; that stretch reads LIGQVFLCCSFVLACFG. Residues 167-196 lie on the Extracellular side of the membrane; the sequence is ALPHVMVTSYYEPSSCIEEDGVLTEQLRTK. The chain crosses the membrane as a helical span at residues 197 to 215; it reads LNTFHTWYSFAGPLFITVI. The Cytoplasmic segment spans residues 216 to 234; that stretch reads CYSMSCYKLFKTKLSKRAE. Residues 235–251 form a helical membrane-spanning segment; it reads VVTIITMTTLLFIVFCI. Residues 252–286 lie on the Extracellular side of the membrane; that stretch reads PYYIMESIDTLLRVGVIEETCAKRSAIVYGIQCTY. Residues 287–303 form a helical membrane-spanning segment; sequence MLLVLYYCMLPLMFAMF. Residues 304–321 lie on the Cytoplasmic side of the membrane; that stretch reads GSLFRQRMAAWCKTICHC.

Belongs to the G-protein coupled receptor 1 family.

The protein localises to the host cell membrane. Its function is as follows. May be highly relevant to the process of cellular transformation and rapid T-cell proliferation effected by HVS during latent infections of T-cells in susceptible hosts. This Saimiri sciureus (Common squirrel monkey) protein is G-protein coupled receptor homolog ECRF3 (74).